Consider the following 76-residue polypeptide: UPF0346 protein lhv_1069 (76 aa).

It belongs to the UPF0346 family.

In Lactobacillus helveticus (strain DPC 4571), this protein is UPF0346 protein lhv_1069.